The chain runs to 468 residues: 3-isopropylmalate dehydratase large subunit (468 aa).

Cys349, Cys409, and Cys412 together coordinate [4Fe-4S] cluster.

The protein belongs to the aconitase/IPM isomerase family. LeuC type 1 subfamily. As to quaternary structure, heterodimer of LeuC and LeuD. It depends on [4Fe-4S] cluster as a cofactor.

The catalysed reaction is (2R,3S)-3-isopropylmalate = (2S)-2-isopropylmalate. It participates in amino-acid biosynthesis; L-leucine biosynthesis; L-leucine from 3-methyl-2-oxobutanoate: step 2/4. In terms of biological role, catalyzes the isomerization between 2-isopropylmalate and 3-isopropylmalate, via the formation of 2-isopropylmaleate. The polypeptide is 3-isopropylmalate dehydratase large subunit (Shewanella baltica (strain OS223)).